A 61-amino-acid polypeptide reads, in one-letter code: Large ribosomal subunit protein uL30 (61 aa).

The protein belongs to the universal ribosomal protein uL30 family. As to quaternary structure, part of the 50S ribosomal subunit.

The polypeptide is Large ribosomal subunit protein uL30 (Lacticaseibacillus casei (strain BL23) (Lactobacillus casei)).